A 317-amino-acid polypeptide reads, in one-letter code: AT-hook motif nuclear-localized protein 22 (317 aa).

Disordered stretches follow at residues 22–41 and 48–106; these read HHQF…HDID and LKRD…KPPI. The span at 26–35 shows a compositional bias: low complexity; that stretch reads QHQQQQQQQN. Over residues 48–64 the composition is skewed to basic and acidic residues; that stretch reads LKRDRDADIDPNEHSSA. The segment covering 72–84 has biased composition (gly residues); it reads GSGGESGGGGGGD. Residues 89–101 constitute a DNA-binding region (a.T hook); sequence RRPRGRPAGSKNK. Positions 113–253 constitute a PPC domain; the sequence is ANALKSHVME…EDDQEEQTAG (141 aa). The segment at 258–285 is disordered; the sequence is NIDGNATMGGGTQTQTQTQQQQQQQLMQ. Positions 270 to 282 are enriched in low complexity; the sequence is QTQTQTQQQQQQQ.

In terms of assembly, homodimer. Interacts with HDA1/HDA19, HDA6 and HDA9. In terms of tissue distribution, expressed at the hypocotyl-root transition zone and the root hair zone. Also detected in the inflorescence.

It localises to the nucleus. In terms of biological role, transcription factor that specifically binds AT-rich DNA sequences related to the nuclear matrix attachment regions (MARs). Binds an AT-rich DNA sequences in the FLOWERING LOCUS T (FT) promoter. Acts redundantly with AHL18, AHL27 and AHL29 in the regulation of flowering and regulation of the hypocotyl elongation. Plays a role in both photo- and skotomorphogenesis. Acts as a chromatin remodeling factor that modifies the architecture of FLOWERING LOCUS T (FT) chromatin by modulating both H3 acetylation and methylation leading to the regulation of FT expression during flowering induction. The sequence is that of AT-hook motif nuclear-localized protein 22 from Arabidopsis thaliana (Mouse-ear cress).